The chain runs to 237 residues: Proteasome subunit beta type-1 (237 aa).

The protein belongs to the peptidase T1B family. In terms of assembly, the 26S proteasome consists of a 20S proteasome core and two 19S regulatory subunits. The 20S proteasome core is a barrel-shaped complex made of 28 subunits that are arranged in four stacked rings. The two outer rings are each formed by seven alpha subunits, and the two inner rings are formed by seven beta subunits. The proteolytic activity is exerted by three beta-subunits psmb5, psmb6 and psmb7.

It localises to the cytoplasm. Its subcellular location is the nucleus. Its function is as follows. Non-catalytic component of the 20S core proteasome complex involved in the proteolytic degradation of most intracellular proteins. This complex plays numerous essential roles within the cell by associating with different regulatory particles. Associated with two 19S regulatory particles, forms the 26S proteasome and thus participates in the ATP-dependent degradation of ubiquitinated proteins. The 26S proteasome plays a key role in the maintenance of protein homeostasis by removing misfolded or damaged proteins that could impair cellular functions, and by removing proteins whose functions are no longer required. Associated with the PA200 or PA28, the 20S proteasome mediates ubiquitin-independent protein degradation. In Danio rerio (Zebrafish), this protein is Proteasome subunit beta type-1.